Consider the following 1217-residue polypeptide: ATP-dependent helicase/nuclease subunit A (1217 aa).

In terms of domain architecture, UvrD-like helicase ATP-binding spans 10 to 475 (VIWTDAQWQS…IDLSQNFRSR (466 aa)). 31 to 38 (AAAGSGKT) lines the ATP pocket. The UvrD-like helicase C-terminal domain maps to 476-786 (KEVLSTTNYI…RMMTIHSSKG (311 aa)).

Belongs to the helicase family. AddA subfamily. Heterodimer of AddA and AddB/RexB. The cofactor is Mg(2+).

It carries out the reaction Couples ATP hydrolysis with the unwinding of duplex DNA by translocating in the 3'-5' direction.. The catalysed reaction is ATP + H2O = ADP + phosphate + H(+). Functionally, the heterodimer acts as both an ATP-dependent DNA helicase and an ATP-dependent, dual-direction single-stranded exonuclease. Recognizes the chi site generating a DNA molecule suitable for the initiation of homologous recombination. The AddA nuclease domain is required for chi fragment generation; this subunit has the helicase and 3' -&gt; 5' nuclease activities. This is ATP-dependent helicase/nuclease subunit A from Staphylococcus aureus (strain USA300).